A 748-amino-acid chain; its full sequence is Cytosolic phospholipase A2 (748 aa).

The phospholipid binding stretch occupies residues 1–178 (MSFIDPYQHI…MRKLLGPKKS (178 aa)). Serine 2 carries the post-translational modification Phosphoserine. One can recognise a C2 domain in the interval 6 to 122 (PYQHIIVEHQ…KVGEKKEVPF (117 aa)). Aspartate 40, threonine 41, aspartate 43, asparagine 65, aspartate 93, alanine 94, and asparagine 95 together coordinate Ca(2+). The 602-residue stretch at 138–739 (VCSSPDLRFS…SNVEARRFFN (602 aa)) folds into the PLA2c domain. Serine 228 functions as the Nucleophile in the catalytic mechanism. A Phosphothreonine modification is found at threonine 268. A disordered region spans residues 428–458 (HIVSNDSSDSDDESQEPKGTEGEDAEREYQN). Phosphoserine occurs at positions 434, 435, and 437. Basic and acidic residues predominate over residues 442–458 (QEPKGTEGEDAEREYQN). Position 505 is a phosphoserine; by MAPK (serine 505). Serine 514 carries the post-translational modification Phosphoserine. Residue lysine 540 forms a Glycyl lysine isopeptide (Lys-Gly) (interchain with G-Cter in SUMO2) linkage. The active-site Proton acceptor is the aspartate 548. Lysine 605 is covalently cross-linked (Glycyl lysine isopeptide (Lys-Gly) (interchain with G-Cter in SUMO2)). Phosphoserine is present on residues serine 726 and serine 728.

As to quaternary structure, interacts with KAT5. Phosphorylated at both Ser-505 and Ser-726 in response to mitogenic stimuli.

Its subcellular location is the cytoplasm. The protein resides in the golgi apparatus membrane. The protein localises to the nucleus envelope. It catalyses the reaction a 1,2-diacyl-sn-glycero-3-phosphocholine + H2O = a 1-acyl-sn-glycero-3-phosphocholine + a fatty acid + H(+). The enzyme catalyses a 1-O-alkyl-2-acyl-sn-glycero-3-phosphocholine + H2O = a 1-O-alkyl-sn-glycero-3-phosphocholine + a fatty acid + H(+). The catalysed reaction is a 1-acyl-sn-glycero-3-phosphocholine + H2O = sn-glycerol 3-phosphocholine + a fatty acid + H(+). It carries out the reaction 1-hexadecanoyl-2-(5Z,8Z,11Z,14Z-eicosatetraenoyl)-sn-glycero-3-phosphocholine + H2O = 1-hexadecanoyl-sn-glycero-3-phosphocholine + (5Z,8Z,11Z,14Z)-eicosatetraenoate + H(+). It catalyses the reaction 1,2-di-(5Z,8Z,11Z,14Z-eicosatetraenoyl)-sn-glycero-3-phosphocholine + H2O = 1-(5Z,8Z,11Z,14Z-eicosatetraenoyl)-sn-glycero-3-phosphocholine + (5Z,8Z,11Z,14Z)-eicosatetraenoate + H(+). The enzyme catalyses 1-octadecanoyl-2-(5Z,8Z,11Z,14Z-eicosatetraenoyl)-sn-glycero-3-phosphocholine + H2O = 1-octadecanoyl-sn-glycero-3-phosphocholine + (5Z,8Z,11Z,14Z)-eicosatetraenoate + H(+). The catalysed reaction is 1-hexadecanoyl-2-(9Z,12Z-octadecadienoyl)-sn-glycero-3-phosphocholine + H2O = (9Z,12Z)-octadecadienoate + 1-hexadecanoyl-sn-glycero-3-phosphocholine + H(+). It carries out the reaction 1-octadecanoyl-2-(9Z,12Z,15Z-octadecatrienoyl)-sn-glycero-3-phosphocholine + H2O = (9Z,12Z,15Z)-octadecatrienoate + 1-octadecanoyl-sn-glycero-3-phosphocholine + H(+). It catalyses the reaction 1-(5Z,8Z,11Z,14Z-eicosatetraenoyl)-2-hexadecanoyl-sn-glycero-3-phosphocholine + H2O = 1-(5Z,8Z,11Z,14Z-eicosatetraenoyl)-sn-glycero-3-phosphocholine + hexadecanoate + H(+). The enzyme catalyses 1-O-hexadecyl-2-(5Z,8Z,11Z,14Z)-eicosatetraenoyl-sn-glycero-3-phosphocholine + H2O = 1-O-hexadecyl-sn-glycero-3-phosphocholine + (5Z,8Z,11Z,14Z)-eicosatetraenoate + H(+). The catalysed reaction is 1,2-di-(9Z-octadecenoyl)-sn-glycero-3-phospho-(1'-sn-glycerol) + H2O = 1-(9Z-octadecenoyl)-sn-glycero-3-phospho-(1'-sn-glycerol) + (9Z)-octadecenoate + H(+). It carries out the reaction 1-octadecanoyl-2-(5Z,8Z,11Z,14Z-eicosatetraenoyl)-sn-glycero-3-phosphate + H2O = 1-octadecanoyl-sn-glycero-3-phosphate + (5Z,8Z,11Z,14Z)-eicosatetraenoate + H(+). It catalyses the reaction 1-hexadecanoyl-sn-glycero-3-phosphocholine + H2O = sn-glycerol 3-phosphocholine + hexadecanoate + H(+). The enzyme catalyses 2-(prostaglandin E2)-sn-glycero-3-phosphoethanolamine + H2O = sn-glycero-3-phosphoethanolamine + prostaglandin E2 + H(+). The catalysed reaction is 2-[(15S)-hydroxy-(5Z,8Z,11Z,13E)-eicosatetraenoyl]-sn-glycero-3-phosphocholine + H2O = (15S)-hydroxy-(5Z,8Z,11Z,13E)-eicosatetraenoate + sn-glycerol 3-phosphocholine + H(+). It carries out the reaction 2-[(15R)-hydroxy-(5Z,8Z,11Z,13E)-eicosatetraenoyl]-sn-glycero-3-phosphocholine + H2O = (15R)-hydroxy-(5Z,8Z,11Z,13E)-eicosatetraenoate + sn-glycerol 3-phosphocholine + H(+). It catalyses the reaction 2-(prostaglandin E2)-sn-glycero-3-phosphocholine + H2O = prostaglandin E2 + sn-glycerol 3-phosphocholine + H(+). The enzyme catalyses 2-[(11R)-hydroxy-(5Z,8Z,12E,14Z)-eicosatetraenoyl]-sn-glycero-3-phosphocholine + H2O = (11R)-hydroxy-(5Z,8Z,12E,14Z)-eicosatetraenoate + sn-glycerol 3-phosphocholine + H(+). The catalysed reaction is 1-(5Z,8Z,11Z,14Z-eicosatetraenoyl)-2-O-hexadecyl-sn-glycero-3-phosphocholine + H2O = 2-O-hexadecyl-sn-glycero-3-phosphocholine + (5Z,8Z,11Z,14Z)-eicosatetraenoate + H(+). It carries out the reaction 1-octadecanoyl-2-(5Z,8Z,11Z,14Z-eicosatetraenoyl)-sn-glycero-3-phosphocholine + glycerol = 1-(5Z,8Z,11Z,14Z-eicosatetraenoyl)-glycerol + 1-octadecanoyl-sn-glycero-3-phosphocholine. It catalyses the reaction 1-octadecanoyl-2-(9Z,12Z,15Z-octadecatrienoyl)-sn-glycero-3-phosphocholine + glycerol = 1-(9Z,12Z,15Z-octadecatrienoyl)-glycerol + 1-octadecanoyl-sn-glycero-3-phosphocholine. Its pathway is membrane lipid metabolism; glycerophospholipid metabolism. The protein operates within lipid metabolism; arachidonate metabolism. It participates in lipid metabolism; prostaglandin biosynthesis. It functions in the pathway lipid metabolism; leukotriene B4 biosynthesis. With respect to regulation, activated by cytosolic calcium, which is necessary for binding to membrane lipids. Activated by phosphorylation in response to mitogenic stimuli. In terms of biological role, has primarily calcium-dependent phospholipase and lysophospholipase activities, with a major role in membrane lipid remodeling and biosynthesis of lipid mediators of the inflammatory response. Plays an important role in embryo implantation and parturition through its ability to trigger prostanoid production. Preferentially hydrolyzes the ester bond of the fatty acyl group attached at sn-2 position of phospholipids (phospholipase A2 activity). Selectively hydrolyzes sn-2 arachidonoyl group from membrane phospholipids, providing the precursor for eicosanoid biosynthesis via the cyclooxygenase pathway. In an alternative pathway of eicosanoid biosynthesis, hydrolyzes sn-2 fatty acyl chain of eicosanoid lysophopholipids to release free bioactive eicosanoids. Hydrolyzes the ester bond of the fatty acyl group attached at sn-1 position of phospholipids (phospholipase A1 activity) only if an ether linkage rather than an ester linkage is present at the sn-2 position. This hydrolysis is not stereospecific. Has calcium-independent phospholipase A2 and lysophospholipase activities in the presence of phosphoinositides. Has O-acyltransferase activity. Catalyzes the transfer of fatty acyl chains from phospholipids to a primary hydroxyl group of glycerol (sn-1 or sn-3), potentially contributing to monoacylglycerol synthesis. In Oryctolagus cuniculus (Rabbit), this protein is Cytosolic phospholipase A2 (PLA2G4A).